The sequence spans 378 residues: MMYASDGSGVNPFQQYGITTGLTAAAAAKACTLTVLKGVQNRVVVPTPIGIRIEVKVVESVRIDESSGYASAEKFSGDNPDQLNGITIRCHCKVVKKQENGRSKITISGNAGIGVVEKDGLGIRPGEKAISQGARKMIEDAVREAAGGYDVELSISVPNGEEFAKLTMNEKVGVFGGISVLGTTGIEEPVSTEEYELHLKYIVAAGRCVSKIIVLCPGNTALKFAKKYFALPDKAFVLIGDKVGAAVSASIESAYDHVVIFGLPGKLVKIAAGIYNTHSKVADGRMETLAAVAAMYGISKGAVKRIMESSNTGEAISIIEQEGIVAEVLNTIASRISNRLKADFSRSVGFSVVIIDHDGKIIGSHLDGHIKEVLKYGK.

It belongs to the CbiD family.

The catalysed reaction is Co-precorrin-5B + S-adenosyl-L-methionine = Co-precorrin-6A + S-adenosyl-L-homocysteine. It participates in cofactor biosynthesis; adenosylcobalamin biosynthesis; cob(II)yrinate a,c-diamide from sirohydrochlorin (anaerobic route): step 6/10. Its function is as follows. Catalyzes the methylation of C-1 in cobalt-precorrin-5B to form cobalt-precorrin-6A. This Thermoplasma volcanium (strain ATCC 51530 / DSM 4299 / JCM 9571 / NBRC 15438 / GSS1) protein is Cobalt-precorrin-5B C(1)-methyltransferase.